Consider the following 113-residue polypeptide: Hydrogenase maturation factor HypA (113 aa).

Histidine 2 serves as a coordination point for Ni(2+). 4 residues coordinate Zn(2+): cysteine 70, cysteine 73, cysteine 86, and cysteine 88.

Belongs to the HypA/HybF family.

Involved in the maturation of [NiFe] hydrogenases. Required for nickel insertion into the metal center of the hydrogenase. This is Hydrogenase maturation factor HypA from Nostoc punctiforme (strain ATCC 29133 / PCC 73102).